The chain runs to 136 residues: Large ribosomal subunit protein uL16 (136 aa).

This sequence belongs to the universal ribosomal protein uL16 family. As to quaternary structure, part of the 50S ribosomal subunit.

Binds 23S rRNA and is also seen to make contacts with the A and possibly P site tRNAs. This Edwardsiella ictaluri (strain 93-146) protein is Large ribosomal subunit protein uL16.